A 444-amino-acid chain; its full sequence is Maltoporin (444 aa).

The signal sequence occupies residues M1–A24.

It belongs to the porin LamB (TC 1.B.3) family. In terms of assembly, homotrimer formed of three 18-stranded antiparallel beta-barrels, containing three independent channels.

It is found in the cell outer membrane. The enzyme catalyses beta-maltose(in) = beta-maltose(out). Its function is as follows. Involved in the transport of maltose and maltodextrins. This Enterobacter sp. (strain 638) protein is Maltoporin.